We begin with the raw amino-acid sequence, 122 residues long: MIQQESQLKVADNTGAKKVKCFKVLGGSRRRYATVGDVIVCSVRDIEPDSSVKKGDVVKAVIVRTRNDIHRKDGSTLRFDTNSCVIIDDKGNPKGTRIFGPVAREIRDRGFVKISSLAPEVI.

It belongs to the universal ribosomal protein uL14 family. In terms of assembly, part of the 50S ribosomal subunit. Forms a cluster with proteins L3 and L19. In the 70S ribosome, L14 and L19 interact and together make contacts with the 16S rRNA in bridges B5 and B8.

Functionally, binds to 23S rRNA. Forms part of two intersubunit bridges in the 70S ribosome. This Chlamydia trachomatis serovar L2 (strain ATCC VR-902B / DSM 19102 / 434/Bu) protein is Large ribosomal subunit protein uL14.